Here is a 576-residue protein sequence, read N- to C-terminus: Proline--tRNA ligase (576 aa).

This sequence belongs to the class-II aminoacyl-tRNA synthetase family. ProS type 1 subfamily. Homodimer.

It is found in the cytoplasm. The enzyme catalyses tRNA(Pro) + L-proline + ATP = L-prolyl-tRNA(Pro) + AMP + diphosphate. Its function is as follows. Catalyzes the attachment of proline to tRNA(Pro) in a two-step reaction: proline is first activated by ATP to form Pro-AMP and then transferred to the acceptor end of tRNA(Pro). As ProRS can inadvertently accommodate and process non-cognate amino acids such as alanine and cysteine, to avoid such errors it has two additional distinct editing activities against alanine. One activity is designated as 'pretransfer' editing and involves the tRNA(Pro)-independent hydrolysis of activated Ala-AMP. The other activity is designated 'posttransfer' editing and involves deacylation of mischarged Ala-tRNA(Pro). The misacylated Cys-tRNA(Pro) is not edited by ProRS. In Bordetella pertussis (strain Tohama I / ATCC BAA-589 / NCTC 13251), this protein is Proline--tRNA ligase.